The sequence spans 258 residues: Venom plasminogen activator TSV-PA (258 aa).

The signal sequence occupies residues 1–18 (MELIRVLANLLILQLSYA). Residues 19-24 (QKSSEL) constitute a propeptide that is removed on maturation. One can recognise a Peptidase S1 domain in the interval 25-249 (VFGGDECNIN…YLDWIKSIIA (225 aa)). Disulfide bonds link cysteine 31–cysteine 163, cysteine 50–cysteine 66, cysteine 98–cysteine 256, cysteine 142–cysteine 210, cysteine 174–cysteine 189, and cysteine 200–cysteine 225. Active-site charge relay system residues include histidine 65 and aspartate 110. Residue asparagine 185 is glycosylated (N-linked (GlcNAc...) asparagine). Serine 204 functions as the Charge relay system in the catalytic mechanism.

Belongs to the peptidase S1 family. Snake venom subfamily. In terms of assembly, monomer. Expressed by the venom gland.

Its subcellular location is the secreted. Snake venom serine protease that activates plasminogen. This is Venom plasminogen activator TSV-PA from Trimeresurus stejnegeri (Chinese green tree viper).